A 1613-amino-acid chain; its full sequence is Myosin-IIIa (1613 aa).

Residues 21–287 (WEIIETIGKG…VSDLLKHKFI (267 aa)) enclose the Protein kinase domain. ATP-binding positions include 27-35 (IGKGTYGKV) and Lys50. The Proton acceptor role is filled by Asp150. The region spanning 338–1052 (KDVDDLATLD…HVEQLNLMRK (715 aa)) is the Myosin motor domain. The segment at 933–955 (LMDLLSKMVVGQPHFVRCIKPNN) is actin-binding. 2 consecutive IQ domains span residues 1054–1083 (ATNKLVLIQASVRAFLGARRYQELQQKRKS) and 1081–1110 (RKSSAVIIQSAARGHLVRKQRKEIVDMKNT). Disordered regions lie at residues 1136–1168 (VKKQTENAVPTNESNTSTPNNKESPSAGKTAPF) and 1476–1506 (SGVSKGEEPKILRPPRRPRKPKTLNNPEDST). Low complexity predominate over residues 1145-1161 (PTNESNTSTPNNKESPS). The segment at 1398–1476 (EGVHHSKMVD…RHVSTHQYLS (79 aa)) is interaction with MORN4. A compositionally biased stretch (basic residues) spans 1488–1497 (RPPRRPRKPK).

In the C-terminal section; belongs to the TRAFAC class myosin-kinesin ATPase superfamily. Myosin family. This sequence in the N-terminal section; belongs to the protein kinase superfamily. STE Ser/Thr protein kinase family. As to quaternary structure, interacts with MORN4. Interacts (via C-terminus) with ESPN and ESPNL. As to expression, expressed in the cochlear hair cells (at protein level). Expressed in utricle hair bundles (at protein level).

It is found in the cytoplasm. The protein localises to the cytoskeleton. Its subcellular location is the cell projection. The protein resides in the filopodium tip. It localises to the stereocilium. The catalysed reaction is L-seryl-[protein] + ATP = O-phospho-L-seryl-[protein] + ADP + H(+). It catalyses the reaction L-threonyl-[protein] + ATP = O-phospho-L-threonyl-[protein] + ADP + H(+). The enzyme catalyses ATP + H2O = ADP + phosphate + H(+). Actin-dependent motor protein with a protein kinase activity, playing an essential role in hearing. Probably plays also a role in vision. Required for normal cochlear hair bundle development and hearing. Plays an important role in the early steps of cochlear hair bundle morphogenesis. Influences the number and lengths of stereocilia to be produced and limits the growth of microvilli within the forming auditory hair bundles thereby contributing to the architecture of the hair bundle, including its staircase pattern. Involved in the elongation of actin in stereocilia tips by transporting the actin regulatory factor ESPN to the plus ends of actin filaments. This chain is Myosin-IIIa (Myo3a), found in Mus musculus (Mouse).